The following is a 579-amino-acid chain: Salivary alpha-glucosidase (579 aa).

Positions 1-18 are cleaved as a signal peptide; sequence MKIFVPLLSFLLAGLTTG. Residues D37, D39, D41, I43, D45, and N118 each contribute to the Ca(2+) site. N-linked (GlcNAc...) asparagine glycosylation is found at N118 and N151. Ca(2+) is bound at residue D189. D219 functions as the Nucleophile in the catalytic mechanism. Ca(2+)-binding residues include Y223, L224, and E226. N282 carries N-linked (GlcNAc...) asparagine glycosylation. E290 functions as the Proton donor in the catalytic mechanism. N304, N325, and N401 each carry an N-linked (GlcNAc...) asparagine glycan. N325 is a binding site for N-acetyl-beta-D-glucosamine.

It belongs to the glycosyl hydrolase 13 family. Saliva (at protein level). Proximal lateral lobes of the salivary gland (at protein level).

It localises to the secreted. The enzyme catalyses Hydrolysis of terminal, non-reducing (1-&gt;4)-linked alpha-D-glucose residues with release of alpha-D-glucose.. Functions as a glucosidase that shows high activity toward sucrose, a major component of nectar. Assists the mosquito in its sugar-feeding capabilities. This chain is Salivary alpha-glucosidase, found in Aedes aegypti (Yellowfever mosquito).